A 699-amino-acid chain; its full sequence is Elongation factor G (699 aa).

Residues Glu-8 to Met-288 enclose the tr-type G domain. GTP is bound by residues Ala-17–Thr-24, Asp-86–His-90, and Asn-140–Asp-143.

It belongs to the TRAFAC class translation factor GTPase superfamily. Classic translation factor GTPase family. EF-G/EF-2 subfamily.

Its subcellular location is the cytoplasm. Its function is as follows. Catalyzes the GTP-dependent ribosomal translocation step during translation elongation. During this step, the ribosome changes from the pre-translocational (PRE) to the post-translocational (POST) state as the newly formed A-site-bound peptidyl-tRNA and P-site-bound deacylated tRNA move to the P and E sites, respectively. Catalyzes the coordinated movement of the two tRNA molecules, the mRNA and conformational changes in the ribosome. This is Elongation factor G from Rhizobium johnstonii (strain DSM 114642 / LMG 32736 / 3841) (Rhizobium leguminosarum bv. viciae).